Here is a 438-residue protein sequence, read N- to C-terminus: Glutamate-1-semialdehyde 2,1-aminomutase (438 aa).

At lysine 277 the chain carries N6-(pyridoxal phosphate)lysine.

It belongs to the class-III pyridoxal-phosphate-dependent aminotransferase family. HemL subfamily. Homodimer. Requires pyridoxal 5'-phosphate as cofactor.

Its subcellular location is the cytoplasm. It catalyses the reaction (S)-4-amino-5-oxopentanoate = 5-aminolevulinate. It participates in porphyrin-containing compound metabolism; protoporphyrin-IX biosynthesis; 5-aminolevulinate from L-glutamyl-tRNA(Glu): step 2/2. Its pathway is porphyrin-containing compound metabolism; chlorophyll biosynthesis. This is Glutamate-1-semialdehyde 2,1-aminomutase from Synechococcus sp. (strain CC9311).